Consider the following 596-residue polypeptide: Inactive metallocarboxypeptidase ECM14 (596 aa).

An N-terminal signal peptide occupies residues 1 to 22; the sequence is MHFSVRLSLFLTLASSLPLVSA. Positions 23 to 184 are excised as a propeptide; the sequence is VPQHEDQAYT…QTIYESYPKA (162 aa). The tract at residues 182-211 is disordered; that stretch reads PKAGSASPSQQGPTTRRFSPSASTSKSKPH. The segment covering 187-207 has biased composition (polar residues); it reads ASPSQQGPTTRRFSPSASTSK. Residues 220-546 enclose the Peptidase M14 domain; it reads DYQPLSVLLP…RAMVAMGKFL (327 aa). Residues His-285 and Glu-288 each contribute to the Zn(2+) site. Substrate contacts are provided by residues 285-288, Arg-343, and 360-361; these read HARE and DH. A disulfide bond links Cys-354 and Cys-377. The N-linked (GlcNAc...) asparagine glycan is linked to Asn-370. His-417 contacts Zn(2+). 418–419 contacts substrate; the sequence is SY. A disordered region spans residues 557–596; sequence DGLRASEEPQDYDNDLEDGEDDKDEQGSTVFRAQADDLQS. Residues 564 to 580 show a composition bias toward acidic residues; it reads EPQDYDNDLEDGEDDKD. Residues 583 to 596 are compositionally biased toward polar residues; it reads GSTVFRAQADDLQS.

The protein belongs to the peptidase M14 family. The cofactor is Zn(2+).

It is found in the vacuole. The protein localises to the secreted. In terms of biological role, inactive carboxypeptidase that may play a role in cell wall organization and biogenesis. The sequence is that of Inactive metallocarboxypeptidase ECM14 (ECM14) from Arthroderma benhamiae (strain ATCC MYA-4681 / CBS 112371) (Trichophyton mentagrophytes).